The sequence spans 300 residues: Nuclear egress protein 1 (300 aa).

The CCCH-type zinc finger occupies C90–H217.

Belongs to the herpesviridae NEC1 protein family. In terms of assembly, forms a heterohexameric complex with NEC2. Interacts with capsid vertex specific component 2/CVC2; this interaction directs the capsid to the host inner nuclear membrane to initiate budding. In terms of processing, phosphorylated at serine residues in the N-terminus. This phosphorylation regulates the localization within the inner nuclear membrane.

It is found in the host nucleus inner membrane. In terms of biological role, plays an essential role in virion nuclear egress, the first step of virion release from infected cell. Within the host nucleus, NEC1 interacts with the newly formed capsid through the vertexes and directs it to the inner nuclear membrane by associating with NEC2. Induces the budding of the capsid at the inner nuclear membrane as well as its envelopment into the perinuclear space. There, the NEC1/NEC2 complex promotes the fusion of the enveloped capsid with the outer nuclear membrane and the subsequent release of the viral capsid into the cytoplasm where it will reach the secondary budding sites in the host Golgi or trans-Golgi network. The chain is Nuclear egress protein 1 from Gallid herpesvirus 2 (strain Chicken/Md5/ATCC VR-987) (GaHV-2).